The chain runs to 416 residues: UDP-N-acetylglucosamine 1-carboxyvinyltransferase (416 aa).

22–23 (KN) provides a ligand contact to phosphoenolpyruvate. UDP-N-acetyl-alpha-D-glucosamine is bound at residue R92. C116 serves as the catalytic Proton donor. At C116 the chain carries 2-(S-cysteinyl)pyruvic acid O-phosphothioketal. UDP-N-acetyl-alpha-D-glucosamine is bound by residues 121-125 (RPVDQ), D304, and I326.

The protein belongs to the EPSP synthase family. MurA subfamily.

Its subcellular location is the cytoplasm. The enzyme catalyses phosphoenolpyruvate + UDP-N-acetyl-alpha-D-glucosamine = UDP-N-acetyl-3-O-(1-carboxyvinyl)-alpha-D-glucosamine + phosphate. It functions in the pathway cell wall biogenesis; peptidoglycan biosynthesis. Its function is as follows. Cell wall formation. Adds enolpyruvyl to UDP-N-acetylglucosamine. The chain is UDP-N-acetylglucosamine 1-carboxyvinyltransferase from Aromatoleum aromaticum (strain DSM 19018 / LMG 30748 / EbN1) (Azoarcus sp. (strain EbN1)).